We begin with the raw amino-acid sequence, 601 residues long: Beta-phellandrene synthase (601 aa).

The transit peptide at 1–35 (MSTISIHHVGILRNPLPSKNKRALINNPWSLSLPR) directs the protein to the chloroplast. Mn(2+) is bound by residues Asp-356 and Asp-360. The short motif at 356–360 (DDVYD) is the DDXXD motif element. Homodimerization stretches follow at residues 362–368 (YGTLDEL) and 434–471 (EAEW…LSIP). Residues Asp-499 and Glu-507 each coordinate Mn(2+).

This sequence belongs to the terpene synthase family. Homodimer. Mn(2+) serves as cofactor. Requires Mg(2+) as cofactor. Expressed in peltate glandular trichomes. Present at low levels in flowers and stems.

The protein localises to the plastid. It is found in the chloroplast. It carries out the reaction (2E)-geranyl diphosphate = beta-phellandrene + diphosphate. The catalysed reaction is (2E)-geranyl diphosphate = (1R,5R)-sabinene + diphosphate. It functions in the pathway secondary metabolite biosynthesis; terpenoid biosynthesis. Its function is as follows. Involved in the biosynthesis of phenolic monoterpenes natural products. Monoterpene synthase that catalyzes mainly the formation of olefins such as sabinene and beta-phellandrene, and minor amounts of other monoterpenes (e.g. myrcene, gamma-terpinene, alpha-thujene and alpha-pinene) from geranyl diphosphate (GPP). The polypeptide is Beta-phellandrene synthase (Origanum vulgare (Wild marjoram)).